The chain runs to 262 residues: 7alpha-hydroxysteroid dehydrogenase (262 aa).

NADP(+) is bound by residues 13–18 (SSTRGI), R38, 63–64 (NA), and N90. Taurochenodeoxycholate-binding residues include T145 and Y158. NADP(+) is bound by residues Y158, K162, and 191 to 195 (IGTRA). The active-site Proton acceptor is Y158.

This sequence belongs to the short-chain dehydrogenases/reductases (SDR) family. As to quaternary structure, homotetramer. A dynamic equilibrium between dimers and tetramers seems to exist.

It catalyses the reaction cholate + NADP(+) = 3alpha,12alpha-dihydroxy-7-oxo-5beta-cholanate + NADPH + H(+). The enzyme catalyses chenodeoxycholate + NADP(+) = 7-oxolithocholate + NADPH + H(+). The catalysed reaction is 3alpha,7alpha-dihydroxy-12-oxo-5beta-cholanate + NADP(+) = 7,12-dioxo-lithocholate + NADPH + H(+). It carries out the reaction 7alpha-hydroxy-3,12-dioxo-5beta-cholanate + NADP(+) = dehydrocholate + NADPH + H(+). It catalyses the reaction glycochenodeoxycholate + NADP(+) = 7-oxoglycolithocholate + NADPH + H(+). The enzyme catalyses taurochenodeoxycholate + NADP(+) = 7-oxotaurolithocholate + NADPH + H(+). Its activity is regulated as follows. Activated by metal ions such as Mg(2+), Na(+) and K(+). Its function is as follows. 7alpha-hydroxysteroid dehydrogenase that catalyzes the NADP(+)-dependent oxidation of the 7alpha-hydroxy group of 7alpha-hydroxysteroids, such as cholate, chenodeoxycholate, glycochenodeoxycholate and taurochenodeoxycholate, to the corresponding 7-oxosteroids. Is also able to catalyze the reverse reduction reactions. Together with 7beta-HSDH encoded in the adjacent gene, is likely involved in the epimerization of the hydroxy group at C-7 of primary bile acids through 7-keto bile acid intermediates. The sequence is that of 7alpha-hydroxysteroid dehydrogenase from Clostridium sardiniense (Clostridium absonum).